Consider the following 260-residue polypeptide: Thiazole synthase (260 aa).

The active-site Schiff-base intermediate with DXP is Lys-102. 1-deoxy-D-xylulose 5-phosphate contacts are provided by residues Gly-163, Ala-189–Gly-190, and Asn-211–Thr-212.

The protein belongs to the ThiG family. As to quaternary structure, homotetramer. Forms heterodimers with either ThiH or ThiS.

It localises to the cytoplasm. It catalyses the reaction [ThiS sulfur-carrier protein]-C-terminal-Gly-aminoethanethioate + 2-iminoacetate + 1-deoxy-D-xylulose 5-phosphate = [ThiS sulfur-carrier protein]-C-terminal Gly-Gly + 2-[(2R,5Z)-2-carboxy-4-methylthiazol-5(2H)-ylidene]ethyl phosphate + 2 H2O + H(+). The protein operates within cofactor biosynthesis; thiamine diphosphate biosynthesis. Functionally, catalyzes the rearrangement of 1-deoxy-D-xylulose 5-phosphate (DXP) to produce the thiazole phosphate moiety of thiamine. Sulfur is provided by the thiocarboxylate moiety of the carrier protein ThiS. In vitro, sulfur can be provided by H(2)S. The protein is Thiazole synthase of Citrifermentans bemidjiense (strain ATCC BAA-1014 / DSM 16622 / JCM 12645 / Bem) (Geobacter bemidjiensis).